Reading from the N-terminus, the 189-residue chain is Putative manganese efflux pump MntP (189 aa).

A run of 6 helical transmembrane segments spans residues 3-23 (PVSL…AAIG), 41-61 (IIFG…GQAA), 65-85 (VADW…LHMI), 106-128 (WILA…GLAF), 141-161 (GLAT…LGAV), and 168-188 (MVGG…HLSA).

This sequence belongs to the MntP (TC 9.B.29) family.

It localises to the cell inner membrane. Functionally, probably functions as a manganese efflux pump. The chain is Putative manganese efflux pump MntP from Pseudomonas aeruginosa (strain LESB58).